The sequence spans 479 residues: V-type ATP synthase beta chain (479 aa).

Residues 458 to 479 (EGDSEREAPKMDSPHEEISEKS) are disordered.

It belongs to the ATPase alpha/beta chains family.

In terms of biological role, produces ATP from ADP in the presence of a proton gradient across the membrane. The V-type beta chain is a regulatory subunit. This Nitrosococcus oceani (strain ATCC 19707 / BCRC 17464 / JCM 30415 / NCIMB 11848 / C-107) protein is V-type ATP synthase beta chain.